The sequence spans 579 residues: Putative adenine deaminase OB0751 (579 aa).

It belongs to the metallo-dependent hydrolases superfamily. Adenine deaminase family.

The enzyme catalyses adenine + H2O + H(+) = hypoxanthine + NH4(+). The chain is Putative adenine deaminase OB0751 from Oceanobacillus iheyensis (strain DSM 14371 / CIP 107618 / JCM 11309 / KCTC 3954 / HTE831).